Reading from the N-terminus, the 509-residue chain is Maturase K (509 aa).

Belongs to the intron maturase 2 family. MatK subfamily.

Its subcellular location is the plastid. The protein localises to the chloroplast. Functionally, usually encoded in the trnK tRNA gene intron. Probably assists in splicing its own and other chloroplast group II introns. The polypeptide is Maturase K (Nicotiana glutinosa (Tobacco)).